Consider the following 428-residue polypeptide: Adenylosuccinate synthetase (428 aa).

Residues 12 to 18 and 40 to 42 each bind GTP; these read GDEGKGK and GHS. D13 functions as the Proton acceptor in the catalytic mechanism. 2 residues coordinate Mg(2+): D13 and G40. Residues 13–16, 38–41, T128, R142, Q223, T238, and R302 contribute to the IMP site; these read DEGK and NAGH. H41 acts as the Proton donor in catalysis. 298-304 serves as a coordination point for substrate; sequence VTTGRPR. Residues R304, 330–332, and 412–414 contribute to the GTP site; these read KLD and GTG.

It belongs to the adenylosuccinate synthetase family. In terms of assembly, homodimer. It depends on Mg(2+) as a cofactor.

The protein localises to the cytoplasm. It catalyses the reaction IMP + L-aspartate + GTP = N(6)-(1,2-dicarboxyethyl)-AMP + GDP + phosphate + 2 H(+). It participates in purine metabolism; AMP biosynthesis via de novo pathway; AMP from IMP: step 1/2. Plays an important role in the de novo pathway of purine nucleotide biosynthesis. Catalyzes the first committed step in the biosynthesis of AMP from IMP. The chain is Adenylosuccinate synthetase from Bifidobacterium longum (strain DJO10A).